The following is a 148-amino-acid chain: MDIIIENRKVRFNYFIIQEFDAGIVLIGSEVKSLRQRKVSIAESYVTERNMELWLCNLHISEYTQANTKNHNPTRPRKLLLKKKQIYKISGNMKNDGFTVVPLFLYFNDKGIAKAKIVIVKGKKLHDKRETIKARDWNREKSRILRGG.

This sequence belongs to the SmpB family.

The protein resides in the cytoplasm. In terms of biological role, required for rescue of stalled ribosomes mediated by trans-translation. Binds to transfer-messenger RNA (tmRNA), required for stable association of tmRNA with ribosomes. tmRNA and SmpB together mimic tRNA shape, replacing the anticodon stem-loop with SmpB. tmRNA is encoded by the ssrA gene; the 2 termini fold to resemble tRNA(Ala) and it encodes a 'tag peptide', a short internal open reading frame. During trans-translation Ala-aminoacylated tmRNA acts like a tRNA, entering the A-site of stalled ribosomes, displacing the stalled mRNA. The ribosome then switches to translate the ORF on the tmRNA; the nascent peptide is terminated with the 'tag peptide' encoded by the tmRNA and targeted for degradation. The ribosome is freed to recommence translation, which seems to be the essential function of trans-translation. The chain is SsrA-binding protein from Ehrlichia ruminantium (strain Welgevonden).